The sequence spans 453 residues: MMDISPTCYGYIDDEQDLALVFQGVFNGNLRCIERRPYDAEKVELVNPGNIFVFNEEKSGIKRWTDGFSWSPSRISGKFLVYREYNRLGSTHDLPLHNVPEYNIFERAHRKYFYTGLLKKTFSLKFNMDPTDSTKLETFHLIAYYTEKDIHQGSLRRPSENPFFHKFRPSQKLLDALQKVAVGNGRSNPSKNNERGRTKAHNYKTRRSLSSSPSYCDLLSNYNNHPGNIPVRTAVQLPLTTFNNAPREMHQQQHRQQQQYLLPIDEQNKLPLPYMQHQPQPIGVYNPNYQPGLRRTVSQPMIFCNTYNTLPQQPTAAPYERRGVSPSVIYSSNTLSPIPYQNIDPYSSRSGPECNHSKAPIAPTMMPPVHHILVHDYRQPKPVTDSINPPNVNITTSTTNKNLDGIYILPAPRMNPPAQTQYQMIHAPDSMQHPPTFSKNNTSSNPKSHQYSK.

2 disordered regions span residues 183-210 (GNGR…RSLS) and 428-453 (PDSM…QYSK). Positions 198–207 (TKAHNYKTRR) are enriched in basic residues. Positions 433–453 (HPPTFSKNNTSSNPKSHQYSK) are enriched in polar residues.

This is an uncharacterized protein from Saccharomyces cerevisiae (strain ATCC 204508 / S288c) (Baker's yeast).